A 259-amino-acid chain; its full sequence is uncharacterized protein (259 aa).

Positions 82 to 128 form a coiled coil; that stretch reads NSGMAETIEEKREDFQKEEKEDFTEEQNIEDLLAAVADAEGRYQTNQ. Residues 192 to 259 form a disordered region; the sequence is LIQTQNQHPR…SSSRNSSTTS (68 aa). Positions 228–240 are enriched in basic residues; the sequence is KKVHARSRKRRKT. The span at 241 to 259 shows a compositional bias: low complexity; it reads SSSSSSSSSSSSRNSSTTS.

This is an uncharacterized protein from Homo sapiens (Human).